We begin with the raw amino-acid sequence, 1535 residues long: MKPEEIRVNGKEIFKDEEEEDKDLFWFEKPLVTLLFDYKRWNRPLRYIKNDRFENAVSNKMSQYFFHTCPSDGKKIISFTYPPSLSTIEEIIQKRMSLYTTEKGSPEDLYNNWVYTNKKKKNNLSNELINRIEAIEKGSVSIDVLEKRIRLCHDENEQKCLPKWYDPFFNGPYRGTITKVDSQNEDEHFGEMTWKKKIYDIPHKLKNSQEFEEKRNTFHFNRKLLSTDSNNLFTPIGEFDEELASSFYLKEIFLDSEKKSLYSENQKKNGKQPVDTIKNNSNDQALRKHEIEIEKMNKKLPRWSYKLIDDLEQQEEENPEESTGNPGIRSRKAKRVVIYTDKDQNIHTDTSTDSDQAEEIALIRYSQQSDFRRDLIKGSMRSQRRKTLILEMFQANAHPPLFLDRLNKTSFSFNFSKMSMGKELEFKTANSENAEKREAVIKEKTDKSDRLAIAETWDSVTFAQPIRGCILVAQSIVRKYIILPTLIIGKNLGRILFWQSPEWDEDFHEWKKEMHIKCTYNGVQLSETEFPKAWLTDGIQIKILFPFSLKPWHRSKQTSLQVDPIKVKKQNFCFLTVWGRETEQPFGPPRKNPPFFKPILKELKKEMINRFFRVPKTLKNGTKGFMKVEKEKTTLIIQIVFFLKRKMKEFLFVFVKVNPTPLVRSQKIYESNENEKNSILSNKITYESNIQKKSTIDLKNLSLTEKKIKDLSDHTSIIRNQIERVAKDKKRIYLISDRNPSTGETGWYDKDKGRESKKGIWQIFKKRSTRLIRKWPYFLKSLIQKIYTETLLFTISSTDDYAKFFIESTKKSLNKHIYNDEKDKRVIDEINQNTIEFISTINRSFSNITNIFNNSNKNSLTYFELFSLSQAYVFLKLSQTQVFNLYCLGSLLQYHGASTLFKKKIKDYLGSQGIFNFKLKQKKLQNSGINDWKNWLRSHYQYNLPKIRWSRIVPQKWRNRINERRTIKKKGSIFSHSYAKENDQFIYYKKQKNFRMNSLTNQKEKLKKHYRYDLSSYKYLHYEELKNSPLISRSPFQIKGGQEIPYNYNNYNRPKYESFFYVPEIIAINDYLIMGEYVFNTDKNRDRKYLDWGILNLGFKKNINIEYWTHMDTRPFSQDTRTRSNDYRVVENKNLFFLRIHQEINPSNQKNTLFDWMGMNEEMLYYSISSIEPWFFPEFVPRYDIYKIKPCIIPIKSLFLNFYGKESISKNINVNRKANHDTSSNFKKYPVFKNINQEEKEGQGQEVLRSNAQNQQKSFIEKDYKESDIQKPRTKAQSKNNKETELDSFLKKYLLFQLRWNNSLNQKVIDNIKVYSLLLRLKNPREIAISSIQRGEMRLDVMLFQKDITLSGLIKGGLLVIEPIRLYLKWDFQFFMYQIVGISLVHKDKQQIKTRCRIKEYVDKMDFDGSFLPYGKTLVKGHEKHYDLLVPEHILSPRRRRELRILMSFNSGKENIMGRGPFILNGKSVRNCEPFFYEDKYLDTDANKFIQFKFFLWPNYRLEELACMNRYWFDSNNGSRFSMLRIRMYPRHRIL.

Disordered regions lie at residues 264 to 283, 312 to 333, and 1263 to 1282; these read ENQK…NSND, EQQE…SRKA, and DYKE…KNNK.

Belongs to the TIC214 family. In terms of assembly, part of the Tic complex.

The protein resides in the plastid. It is found in the chloroplast. Its function is as follows. Involved in protein precursor import into chloroplasts. May be part of an intermediate translocation complex acting as a protein-conducting channel at the inner envelope. This is Putative protein TIC 214 C-terminal part from Piper cenocladum (Ant piper).